Consider the following 389-residue polypeptide: Succinate--CoA ligase [ADP-forming] subunit beta (389 aa).

Residues 9–244 (KQLFADYGLP…PSQEDERERR (236 aa)) form the ATP-grasp domain. ATP contacts are provided by residues Lys46, 53–55 (GRG), Glu99, Thr102, and Glu107. Asn199 and Asp213 together coordinate Mg(2+). Substrate-binding positions include Asn264 and 321–323 (GIV).

It belongs to the succinate/malate CoA ligase beta subunit family. In terms of assembly, heterotetramer of two alpha and two beta subunits. The cofactor is Mg(2+).

It carries out the reaction succinate + ATP + CoA = succinyl-CoA + ADP + phosphate. It catalyses the reaction GTP + succinate + CoA = succinyl-CoA + GDP + phosphate. It functions in the pathway carbohydrate metabolism; tricarboxylic acid cycle; succinate from succinyl-CoA (ligase route): step 1/1. In terms of biological role, succinyl-CoA synthetase functions in the citric acid cycle (TCA), coupling the hydrolysis of succinyl-CoA to the synthesis of either ATP or GTP and thus represents the only step of substrate-level phosphorylation in the TCA. The beta subunit provides nucleotide specificity of the enzyme and binds the substrate succinate, while the binding sites for coenzyme A and phosphate are found in the alpha subunit. This is Succinate--CoA ligase [ADP-forming] subunit beta from Alcanivorax borkumensis (strain ATCC 700651 / DSM 11573 / NCIMB 13689 / SK2).